A 208-amino-acid chain; its full sequence is Guanylate kinase (208 aa).

The region spanning 4–185 is the Guanylate kinase-like domain; the sequence is GNLYILSAPS…ALADLVHILR (182 aa). ATP is bound at residue 11–18; the sequence is APSGAGKS.

It belongs to the guanylate kinase family.

Its subcellular location is the cytoplasm. It carries out the reaction GMP + ATP = GDP + ADP. In terms of biological role, essential for recycling GMP and indirectly, cGMP. The protein is Guanylate kinase of Mannheimia succiniciproducens (strain KCTC 0769BP / MBEL55E).